The sequence spans 78 residues: Non-structural protein 7 (78 aa).

Positions 1–23 (MLVFLHAVFITVLILLLIGRLQL) are cleaved as a signal peptide. The Lumenal segment spans residues 24-57 (LERLLLNHSFNLKTVNDFNILYRSLAETRLLKVV). A helical membrane pass occupies residues 58 to 78 (LRVIFLVLLGFCCYRLLVTLM). The interval 59–65 (RVIFLVL) is interaction with PPP1CC/PP1-gamma.

It belongs to the coronaviruses ns7/ns7a protein family. Interacts with serine/threonine-protein phosphatase PPP1CC/PP1-gamma; this interaction; this interaction probably promotes EIF2S1/eIF-2alpha dephosphorylation.

The protein resides in the host membrane. Functionally, inhibits the integrated stress response (ISR) in the infected cell by promoting EIF2S1/eIF-2alpha dephosphorylation. Acts as a functional homolog of host PPP1R15A/GADD34 to recruit PP1 phosphatase and dephosphorylate host EIF2S1/eIF-2alpha. May function in the formation of membrane-bound replication complexes or in the assembly of the virus. The sequence is that of Non-structural protein 7 from Porcine transmissible gastroenteritis coronavirus (strain Purdue) (TGEV).